The sequence spans 86 residues: Immunity protein CdiI-1 (86 aa).

Interacts with the C-terminal fragment (CT) of cognate toxin protein CdiA-EC869.

In terms of biological role, immunity protein component of a toxin-immunity protein module, which functions as a cellular contact-dependent growth inhibition (CDI) system. CDI modules allow bacteria to communicate with and inhibit the growth of closely related neighboring bacteria in a contact-dependent fashion. Neutralizes the toxic activity of cognate toxin CdiA-EC869 (the C-terminal 289 residue CT fragment). Does not inhibit toxic activity of CdiA from other toxin-immunity modules or strains of E.coli. This is Immunity protein CdiI-1 from Escherichia coli O157:H7 (strain EC869).